The sequence spans 391 residues: Protein kinase ORF14 (391 aa).

One can recognise a Protein kinase domain in the interval 109–391 (VPLRHTRGNI…ETLVDEFSKI (283 aa)). Lys-134 contributes to the ATP binding site. Asp-235 functions as the Proton acceptor in the catalytic mechanism.

This sequence belongs to the protein kinase superfamily. Ser/Thr protein kinase family.

It catalyses the reaction L-seryl-[protein] + ATP = O-phospho-L-seryl-[protein] + ADP + H(+). The enzyme catalyses L-threonyl-[protein] + ATP = O-phospho-L-threonyl-[protein] + ADP + H(+). The sequence is that of Protein kinase ORF14 (ORF14) from Ictalurid herpesvirus 1 (strain Auburn) (IcHV-1).